Reading from the N-terminus, the 240-residue chain is Probable transcriptional regulatory protein HP_0162 (240 aa).

It belongs to the TACO1 family.

The protein resides in the cytoplasm. The protein is Probable transcriptional regulatory protein HP_0162 of Helicobacter pylori (strain ATCC 700392 / 26695) (Campylobacter pylori).